Consider the following 1521-residue polypeptide: Suppressor of Ty 6 homolog (1521 aa).

A disordered region spans residues 1–238 (MDFIDNQAEE…EEIIEDDGEG (238 aa)). Residues 26–41 (KKMKMAKEKSKRKKKM) show a composition bias toward basic residues. Residues 26 to 42 (KKMKMAKEKSKRKKKMV) carry the Nuclear localization signal motif. Acidic residues-rich tracts occupy residues 45-56 (SDEDEDDDDDEE) and 67-76 (ADDDDEEEDA). Residues 77–89 (KSEKSEKSRHSGE) show a composition bias toward basic and acidic residues. Residues 90-99 (DELDDEDLDL) are compositionally biased toward acidic residues. The span at 126–157 (PIRRPNHEDDDLLSERGSDDGDRRKDRGRGDR) shows a compositional bias: basic and acidic residues. Composition is skewed to acidic residues over residues 166-176 (RSEDDFIEDDG), 191-200 (NLPEGAEDDA), and 209-238 (FNLDEFYDDDDGEDGLEDEEEEIIEDDGEG). In terms of domain architecture, S1 motif spans 1183-1252 (LGDSRQGGCP…ERFSLFLSCK (70 aa)). The SH2 domain maps to 1300–1389 (HPNFHNVSYE…IARFVQPMIQ (90 aa)).

The protein belongs to the SPT6 family. As to quaternary structure, interacts with glp-1 and lin-12. Abundant in embryos, and less abundant in larvae.

It is found in the nucleus. In terms of biological role, histone H3-H4 chaperone that plays a role in maintenance of chromatin structure during RNA polymerase II transcription elongation. Required for several aspects of morphogenesis of C.elegans, including regulation of division in the germline and gut and specification of ventral-uterine precursor cell fate. This chain is Suppressor of Ty 6 homolog (emb-5), found in Caenorhabditis elegans.